Reading from the N-terminus, the 1028-residue chain is Serine/threonine-protein kinase fray2 (1028 aa).

The segment at 1–67 (MSDDKYHHDK…PKPRKNYPNS (67 aa)) is disordered. A compositionally biased stretch (low complexity) spans 20–54 (KQSTAAALSSSSTLASSSSMTTTTTTTSTTTTAAS). Residues 71 to 330 (YELKETIGKG…PSKLLEHRFF (260 aa)) enclose the Protein kinase domain. Residues 77 to 85 (IGKGGSGLV) and Lys100 each bind ATP. The active-site Proton acceptor is Asp195. A Phosphothreonine; by autocatalysis modification is found at Thr230. The segment covering 368–381 (TSSPQFDTGHSNSA) has biased composition (polar residues). Disordered stretches follow at residues 368-467 (TSSP…STVV), 486-561 (AYHQ…LQQP), and 580-914 (DLIT…IQSK). Composition is skewed to low complexity over residues 387–419 (PNEN…NNNN) and 432–458 (TPSH…SNHT). Composition is skewed to polar residues over residues 503–518 (IPNH…SAHS) and 528–542 (IHPT…VVNN). Residues 543–561 (TQQPQTLQPPQQQHQLQQP) are compositionally biased toward low complexity. Over residues 595–616 (IPSSSSHGNIPSLVTTSPKSPL) the composition is skewed to polar residues. Composition is skewed to low complexity over residues 617-642 (QHQQ…ISSN) and 683-700 (SSRA…SHTS). Basic and acidic residues-rich tracts occupy residues 701-714 (SSDE…SDRK), 728-742 (SKRD…DRSN), 753-855 (VSRD…DRSR), and 865-893 (SRDS…DYKS).

Belongs to the protein kinase superfamily. STE Ser/Thr protein kinase family. STE20 subfamily. Mn(2+) serves as cofactor. Undergoes autophosphorylation in the catalytic domain.

The catalysed reaction is L-seryl-[protein] + ATP = O-phospho-L-seryl-[protein] + ADP + H(+). It catalyses the reaction L-threonyl-[protein] + ATP = O-phospho-L-threonyl-[protein] + ADP + H(+). The polypeptide is Serine/threonine-protein kinase fray2 (Dictyostelium discoideum (Social amoeba)).